Here is a 442-residue protein sequence, read N- to C-terminus: tRNA modification GTPase MnmE (442 aa).

R27, E84, and K124 together coordinate (6S)-5-formyl-5,6,7,8-tetrahydrofolate. A TrmE-type G domain is found at 221–366; that stretch reads GLHVVIVGAP…LLDALQAFAE (146 aa). Residues 231–236, 250–256, and 275–278 contribute to the GTP site; these read NAGKSS, SEEAGTT, and DTAG. The Mg(2+) site is built by S235 and T256. K442 is a binding site for (6S)-5-formyl-5,6,7,8-tetrahydrofolate.

Belongs to the TRAFAC class TrmE-Era-EngA-EngB-Septin-like GTPase superfamily. TrmE GTPase family. In terms of assembly, homodimer. Heterotetramer of two MnmE and two MnmG subunits. The cofactor is K(+).

The protein localises to the cytoplasm. Its function is as follows. Exhibits a very high intrinsic GTPase hydrolysis rate. Involved in the addition of a carboxymethylaminomethyl (cmnm) group at the wobble position (U34) of certain tRNAs, forming tRNA-cmnm(5)s(2)U34. This is tRNA modification GTPase MnmE from Brucella ovis (strain ATCC 25840 / 63/290 / NCTC 10512).